The chain runs to 179 residues: Ribosome maturation factor RimM (179 aa).

The PRC barrel domain maps to 100–176 (HGEYHLTELI…FILLTPPSGL (77 aa)).

This sequence belongs to the RimM family. Binds ribosomal protein uS19.

The protein localises to the cytoplasm. In terms of biological role, an accessory protein needed during the final step in the assembly of 30S ribosomal subunit, possibly for assembly of the head region. Essential for efficient processing of 16S rRNA. May be needed both before and after RbfA during the maturation of 16S rRNA. It has affinity for free ribosomal 30S subunits but not for 70S ribosomes. This Prochlorococcus marinus subsp. pastoris (strain CCMP1986 / NIES-2087 / MED4) protein is Ribosome maturation factor RimM.